A 614-amino-acid polypeptide reads, in one-letter code: Bifunctional enzyme CysN/CysC (614 aa).

The tract at residues 1–441 (MTTLLRLATA…SLVTAQDRPP (441 aa)) is sulfate adenylyltransferase. The region spanning 2–217 (TTLLRLATAG…DVYIAGDRNM (216 aa)) is the tr-type G domain. The G1 stretch occupies residues 11–18 (GSVDDGKS). 11–18 (GSVDDGKS) contacts GTP. Residues 67–71 (GITID) are G2. The tract at residues 88-91 (DTPG) is G3. Residues 88 to 92 (DTPGH) and 143 to 146 (NKMD) contribute to the GTP site. The segment at 143-146 (NKMD) is G4. The segment at 180 to 182 (SAL) is G5. An adenylyl-sulfate kinase region spans residues 442–614 (RGKTVWFTGL…EVIDLLESSS (173 aa)). 450–457 (GLSGSGKS) provides a ligand contact to ATP. Catalysis depends on S524, which acts as the Phosphoserine intermediate. A disordered region spans residues 578 to 597 (GIDSPYQRPKNPDLRLTPDR). Residues 587–597 (KNPDLRLTPDR) are compositionally biased toward basic and acidic residues.

It in the C-terminal section; belongs to the APS kinase family. In the N-terminal section; belongs to the TRAFAC class translation factor GTPase superfamily. Classic translation factor GTPase family. CysN/NodQ subfamily. As to quaternary structure, heterodimer composed of CysD, the smaller subunit, and CysNC.

The catalysed reaction is sulfate + ATP + H(+) = adenosine 5'-phosphosulfate + diphosphate. The enzyme catalyses adenosine 5'-phosphosulfate + ATP = 3'-phosphoadenylyl sulfate + ADP + H(+). Its pathway is sulfur metabolism; hydrogen sulfide biosynthesis; sulfite from sulfate: step 1/3. The protein operates within sulfur metabolism; hydrogen sulfide biosynthesis; sulfite from sulfate: step 2/3. With CysD forms the ATP sulfurylase (ATPS) that catalyzes the adenylation of sulfate producing adenosine 5'-phosphosulfate (APS) and diphosphate, the first enzymatic step in sulfur assimilation pathway. APS synthesis involves the formation of a high-energy phosphoric-sulfuric acid anhydride bond driven by GTP hydrolysis by CysN coupled to ATP hydrolysis by CysD. Its function is as follows. APS kinase catalyzes the synthesis of activated sulfate. This is Bifunctional enzyme CysN/CysC (cysNC) from Mycobacterium tuberculosis (strain CDC 1551 / Oshkosh).